Consider the following 203-residue polypeptide: MMKLGLYLTLLFLSVWTVSGEPFKCTNICGKGAIIIAGVAYCCPQGYKPMIRRKMEDAFMATDCDCLFMMPAGQGMYAQYPQAPNQGSFIVQQPPQAPAVAVAPAAATVQVVAPAPTVVAAPPAAPPPPPPVVKVAPPAPRLPTYKPMYQMIRQQPMRQQRTWYHRPAPTYAAPTKSTKPKHEFFKFLDDFLSKQGYRGGNRG.

The first 20 residues, 1–20, serve as a signal peptide directing secretion; the sequence is MMKLGLYLTLLFLSVWTVSG.

In terms of tissue distribution, component of the acid-insoluble and acid-soluble organic matrix of calcified layers of the shell (at protein level).

Its subcellular location is the secreted. This Lottia gigantea (Giant owl limpet) protein is Proline-rich protein 1.